A 120-amino-acid chain; its full sequence is Large ribosomal subunit protein uL18 (120 aa).

It belongs to the universal ribosomal protein uL18 family. In terms of assembly, part of the 50S ribosomal subunit; part of the 5S rRNA/L5/L18/L25 subcomplex. Contacts the 5S and 23S rRNAs.

Functionally, this is one of the proteins that bind and probably mediate the attachment of the 5S RNA into the large ribosomal subunit, where it forms part of the central protuberance. The sequence is that of Large ribosomal subunit protein uL18 from Staphylococcus epidermidis (strain ATCC 35984 / DSM 28319 / BCRC 17069 / CCUG 31568 / BM 3577 / RP62A).